A 620-amino-acid chain; its full sequence is Chaperone protein HscA homolog (620 aa).

Belongs to the heat shock protein 70 family.

Chaperone involved in the maturation of iron-sulfur cluster-containing proteins. Has a low intrinsic ATPase activity which is markedly stimulated by HscB. The chain is Chaperone protein HscA homolog from Pseudomonas fluorescens (strain ATCC BAA-477 / NRRL B-23932 / Pf-5).